The chain runs to 357 residues: Peptide chain release factor 1 (357 aa).

N5-methylglutamine is present on glutamine 233.

The protein belongs to the prokaryotic/mitochondrial release factor family. Methylated by PrmC. Methylation increases the termination efficiency of RF1.

The protein resides in the cytoplasm. Its function is as follows. Peptide chain release factor 1 directs the termination of translation in response to the peptide chain termination codons UAG and UAA. In Syntrophus aciditrophicus (strain SB), this protein is Peptide chain release factor 1.